The primary structure comprises 263 residues: tRNA pseudouridine synthase A (263 aa).

Catalysis depends on aspartate 57, which acts as the Nucleophile. Residue tyrosine 115 participates in substrate binding.

This sequence belongs to the tRNA pseudouridine synthase TruA family. As to quaternary structure, homodimer.

The catalysed reaction is uridine(38/39/40) in tRNA = pseudouridine(38/39/40) in tRNA. Its function is as follows. Formation of pseudouridine at positions 38, 39 and 40 in the anticodon stem and loop of transfer RNAs. This chain is tRNA pseudouridine synthase A, found in Buchnera aphidicola subsp. Schizaphis graminum (strain Sg).